Here is a 549-residue protein sequence, read N- to C-terminus: Chaperonin GroEL 3 (549 aa).

ATP is bound by residues 29–32 (TLGP), 86–90 (DGTTT), Gly414, 477–479 (NAA), and Asp493.

The protein belongs to the chaperonin (HSP60) family. In terms of assembly, forms a cylinder of 14 subunits composed of two heptameric rings stacked back-to-back. Interacts with the co-chaperonin GroES.

Its subcellular location is the cytoplasm. The enzyme catalyses ATP + H2O + a folded polypeptide = ADP + phosphate + an unfolded polypeptide.. Together with its co-chaperonin GroES, plays an essential role in assisting protein folding. The GroEL-GroES system forms a nano-cage that allows encapsulation of the non-native substrate proteins and provides a physical environment optimized to promote and accelerate protein folding. The sequence is that of Chaperonin GroEL 3 from Frankia casuarinae (strain DSM 45818 / CECT 9043 / HFP020203 / CcI3).